The primary structure comprises 110 residues: Phosphoribosyl-ATP pyrophosphatase (110 aa).

Belongs to the PRA-PH family.

It localises to the cytoplasm. It carries out the reaction 1-(5-phospho-beta-D-ribosyl)-ATP + H2O = 1-(5-phospho-beta-D-ribosyl)-5'-AMP + diphosphate + H(+). Its pathway is amino-acid biosynthesis; L-histidine biosynthesis; L-histidine from 5-phospho-alpha-D-ribose 1-diphosphate: step 2/9. The chain is Phosphoribosyl-ATP pyrophosphatase from Pseudomonas fluorescens (strain SBW25).